A 421-amino-acid polypeptide reads, in one-letter code: Serine hydroxymethyltransferase (421 aa).

Residues L121 and 125–127 (GHL) each bind (6S)-5,6,7,8-tetrahydrofolate. An N6-(pyridoxal phosphate)lysine modification is found at K229.

This sequence belongs to the SHMT family. As to quaternary structure, homodimer. Pyridoxal 5'-phosphate is required as a cofactor.

The protein localises to the cytoplasm. The enzyme catalyses (6R)-5,10-methylene-5,6,7,8-tetrahydrofolate + glycine + H2O = (6S)-5,6,7,8-tetrahydrofolate + L-serine. Its pathway is one-carbon metabolism; tetrahydrofolate interconversion. It participates in amino-acid biosynthesis; glycine biosynthesis; glycine from L-serine: step 1/1. In terms of biological role, catalyzes the reversible interconversion of serine and glycine with tetrahydrofolate (THF) serving as the one-carbon carrier. This reaction serves as the major source of one-carbon groups required for the biosynthesis of purines, thymidylate, methionine, and other important biomolecules. Also exhibits THF-independent aldolase activity toward beta-hydroxyamino acids, producing glycine and aldehydes, via a retro-aldol mechanism. The polypeptide is Serine hydroxymethyltransferase (Haemophilus influenzae (strain PittGG)).